Consider the following 466-residue polypeptide: Cysteine--tRNA ligase (466 aa).

A Zn(2+)-binding site is contributed by cysteine 27. The 'HIGH' region signature appears at 29-39; the sequence is PTVYDLAHIGN. The Zn(2+) site is built by cysteine 211, histidine 236, and glutamate 240. The short motif at 270–274 is the 'KMSKS' region element; it reads KMSKS. Lysine 273 serves as a coordination point for ATP.

Belongs to the class-I aminoacyl-tRNA synthetase family. Monomer. Requires Zn(2+) as cofactor.

It localises to the cytoplasm. The enzyme catalyses tRNA(Cys) + L-cysteine + ATP = L-cysteinyl-tRNA(Cys) + AMP + diphosphate. In Anaplasma marginale (strain St. Maries), this protein is Cysteine--tRNA ligase.